Here is a 512-residue protein sequence, read N- to C-terminus: 2,3-bisphosphoglycerate-independent phosphoglycerate mutase (512 aa).

The Mn(2+) site is built by Asp-12 and Ser-62. Ser-62 (phosphoserine intermediate) is an active-site residue. Substrate contacts are provided by residues His-123, 153–154 (RD), Arg-185, Arg-191, 260–263 (RPDR), and Lys-333. Residues Asp-400, His-404, Asp-441, His-442, and His-460 each coordinate Mn(2+).

Belongs to the BPG-independent phosphoglycerate mutase family. Monomer. Mn(2+) is required as a cofactor.

It carries out the reaction (2R)-2-phosphoglycerate = (2R)-3-phosphoglycerate. It participates in carbohydrate degradation; glycolysis; pyruvate from D-glyceraldehyde 3-phosphate: step 3/5. Catalyzes the interconversion of 2-phosphoglycerate and 3-phosphoglycerate. In Clostridium perfringens (strain SM101 / Type A), this protein is 2,3-bisphosphoglycerate-independent phosphoglycerate mutase.